Here is a 555-residue protein sequence, read N- to C-terminus: 1,3-beta-glucanosyltransferase GAS2 (555 aa).

An N-terminal signal peptide occupies residues Met1–Gly24. Cys89 and Cys118 are oxidised to a cystine. (1,3-beta-D-glucosyl)n contacts are provided by residues Tyr107, Ser134–Arg142, Asn175, Glu176, Asp217, and Arg222. Glu176 serves as the catalytic Proton donor. 6 disulfides stabilise this stretch: Cys231–Cys367, Cys247–Cys278, Cys390–Cys442, Cys392–Cys489, Cys399–Cys466, and Cys419–Cys424. The active-site Nucleophile is Glu275. Tyr307 is a binding site for (1,3-beta-D-glucosyl)n. Asn498 carries N-linked (GlcNAc...) asparagine glycosylation. Asp531 carries GPI-anchor amidated aspartate lipidation. Residues Gly532–Leu555 constitute a propeptide, removed in mature form.

This sequence belongs to the glycosyl hydrolase 72 family. N-glycosylated.

It is found in the cell membrane. In terms of biological role, splits internally a 1,3-beta-glucan molecule and transfers the newly generated reducing end (the donor) to the non-reducing end of another 1,3-beta-glucan molecule (the acceptor) forming a 1,3-beta linkage, resulting in the elongation of 1,3-beta-glucan chains in the cell wall. Involved in spore wall assembly. This chain is 1,3-beta-glucanosyltransferase GAS2 (GAS2), found in Saccharomyces cerevisiae (strain ATCC 204508 / S288c) (Baker's yeast).